A 182-amino-acid polypeptide reads, in one-letter code: Isopentenyl-diphosphate Delta-isomerase (182 aa).

Mn(2+) is bound by residues His-25 and His-32. In terms of domain architecture, Nudix hydrolase spans 30–164 (LLHLAFSSWL…PWAFSPWMVM (135 aa)). Cys-67 is a catalytic residue. Position 69 (His-69) interacts with Mn(2+). Glu-87 is a binding site for Mg(2+). 2 residues coordinate Mn(2+): Glu-114 and Glu-116. Glu-116 is an active-site residue.

The protein belongs to the IPP isomerase type 1 family. As to quaternary structure, homodimer. The cofactor is Mg(2+). Mn(2+) is required as a cofactor.

It localises to the cytoplasm. It carries out the reaction isopentenyl diphosphate = dimethylallyl diphosphate. The protein operates within isoprenoid biosynthesis; dimethylallyl diphosphate biosynthesis; dimethylallyl diphosphate from isopentenyl diphosphate: step 1/1. Catalyzes the 1,3-allylic rearrangement of the homoallylic substrate isopentenyl (IPP) to its highly electrophilic allylic isomer, dimethylallyl diphosphate (DMAPP). This Escherichia coli O127:H6 (strain E2348/69 / EPEC) protein is Isopentenyl-diphosphate Delta-isomerase.